The chain runs to 734 residues: Photosystem I P700 chlorophyll a apoprotein A2 (734 aa).

The next 8 helical transmembrane spans lie at 46-69 (IFAS…FHVA), 135-158 (LYTG…LHLE), 175-199 (LNHH…HVAI), 273-291 (IAHH…GHTY), 330-353 (LHFQ…QHMY), 369-395 (AALY…IFLT), 417-439 (AIIS…LYVH), and 517-535 (FPVH…LILS). Residues Cys559 and Cys568 each contribute to the [4Fe-4S] cluster site. 2 helical membrane-spanning segments follow: residues 575–596 (AFYP…HWHW) and 643–665 (LSVW…MFLI). Chlorophyll a-binding residues include His654, Met662, and Tyr670. Trp671 contributes to the phylloquinone binding site. Residues 707–727 (LVGLAHFSVGYIFTYAAFPIP) traverse the membrane as a helical segment.

The protein belongs to the PsaA/PsaB family. As to quaternary structure, the PsaA/B heterodimer binds the P700 chlorophyll special pair and subsequent electron acceptors. PSI consists of a core antenna complex that captures photons, and an electron transfer chain that converts photonic excitation into a charge separation. The eukaryotic PSI reaction center is composed of at least 11 subunits. P700 is a chlorophyll a/chlorophyll a' dimer, A0 is one or more chlorophyll a, A1 is one or both phylloquinones and FX is a shared 4Fe-4S iron-sulfur center. is required as a cofactor.

Its subcellular location is the plastid. It localises to the chloroplast thylakoid membrane. The enzyme catalyses reduced [plastocyanin] + hnu + oxidized [2Fe-2S]-[ferredoxin] = oxidized [plastocyanin] + reduced [2Fe-2S]-[ferredoxin]. In terms of biological role, psaA and PsaB bind P700, the primary electron donor of photosystem I (PSI), as well as the electron acceptors A0, A1 and FX. PSI is a plastocyanin-ferredoxin oxidoreductase, converting photonic excitation into a charge separation, which transfers an electron from the donor P700 chlorophyll pair to the spectroscopically characterized acceptors A0, A1, FX, FA and FB in turn. Oxidized P700 is reduced on the lumenal side of the thylakoid membrane by plastocyanin. The sequence is that of Photosystem I P700 chlorophyll a apoprotein A2 from Selaginella uncinata (Blue spike-moss).